Here is a 131-residue protein sequence, read N- to C-terminus: Gem-associated protein 7 (131 aa).

Met1 is subject to N-acetylmethionine. The region spanning Met1–Gly29 is the SUZ-C domain. The residue at position 3 (Thr3) is a Phosphothreonine. Residues Arg65–Pro131 form the Sm domain.

It belongs to the gemin-7 family. Part of the core SMN complex that contains SMN1, GEMIN2/SIP1, DDX20/GEMIN3, GEMIN4, GEMIN5, GEMIN6, GEMIN7, GEMIN8 and STRAP/UNRIP. Part of the SMN-Sm complex that contains SMN1, GEMIN2/SIP1, DDX20/GEMIN3, GEMIN4, GEMIN5, GEMIN6, GEMIN7, GEMIN8, STRAP/UNRIP and the Sm proteins SNRPB, SNRPD1, SNRPD2, SNRPD3, SNRPE, SNRPF and SNRPG. Interacts with GEMIN6; the interaction is direct. Interacts with STRAP/UNRIP; the interaction is direct. Interacts with GEMIN8; the interaction is direct. Interacts with SNRPB, SNRPD2, SNRPD3 and SNRPE; the interaction is direct.

It localises to the nucleus. The protein localises to the nucleoplasm. Its subcellular location is the gem. It is found in the cytoplasm. The SMN complex catalyzes the assembly of small nuclear ribonucleoproteins (snRNPs), the building blocks of the spliceosome, and thereby plays an important role in the splicing of cellular pre-mRNAs. Most spliceosomal snRNPs contain a common set of Sm proteins SNRPB, SNRPD1, SNRPD2, SNRPD3, SNRPE, SNRPF and SNRPG that assemble in a heptameric protein ring on the Sm site of the small nuclear RNA to form the core snRNP (Sm core). In the cytosol, the Sm proteins SNRPD1, SNRPD2, SNRPE, SNRPF and SNRPG are trapped in an inactive 6S pICln-Sm complex by the chaperone CLNS1A that controls the assembly of the core snRNP. To assemble core snRNPs, the SMN complex accepts the trapped 5Sm proteins from CLNS1A forming an intermediate. Binding of snRNA inside 5Sm triggers eviction of the SMN complex, thereby allowing binding of SNRPD3 and SNRPB to complete assembly of the core snRNP. The chain is Gem-associated protein 7 (GEMIN7) from Homo sapiens (Human).